A 274-amino-acid polypeptide reads, in one-letter code: uncharacterized protein (274 aa).

An N-terminal signal peptide occupies residues 1-21 (MRKLTLLPLLLIITGLLTVQA). Residues 249–266 (TSAFVILTASALIFIYLF) form a helical membrane-spanning segment.

Its subcellular location is the membrane. This is an uncharacterized protein from Archaeoglobus fulgidus (strain ATCC 49558 / DSM 4304 / JCM 9628 / NBRC 100126 / VC-16).